Consider the following 244-residue polypeptide: Sperm-egg fusion protein Juno (244 aa).

An N-terminal signal peptide occupies residues 1–19 (MAQWWQILLGLWAVLPTLA). Cystine bridges form between cysteine 27-cysteine 55, cysteine 47-cysteine 95, cysteine 56-cysteine 99, cysteine 79-cysteine 166, cysteine 86-cysteine 137, cysteine 126-cysteine 200, cysteine 130-cysteine 180, and cysteine 143-cysteine 160. Residues 62–81 (WEAHLEEPLLFNFSMMHCGL) are important for interaction with IZUMO1. Residue asparagine 73 is glycosylated (N-linked (GlcNAc...) asparagine). Asparagine 185 is a glycosylation site (N-linked (GlcNAc...) asparagine). Glycine 222 carries the GPI-anchor amidated glycine lipid modification. A propeptide spanning residues 223–244 (SALAPQLSYTLPAFSLCLLFHP) is cleaved from the precursor.

The protein belongs to the folate receptor family. Monomer. Interacts with IZUMO1; the interaction is direct. IZUMO1 and IZUMO1R/JUNO form a complex with 1:1 stoichiometry. Interacts with WDR54. In terms of processing, the protein is rapidly cleaved following fertilization, being only weakly detectable in zona-intact fertilized eggs at telophase II and undetectable at the pronuclear stage. Sheding is probably required to block to polyspermy and ensuring egg fusion with a single sperm. As to expression, widely expressed with higher expression in thymus, spleen and lung. Present at the cell surface of unfertilized oocytes, while it is barely detectable 30 to 40 minutes after fertilization (at protein level).

It localises to the cell membrane. Receptor for IZUMO1 present at the cell surface of oocytes (oolemma), which is essential for species-specific gamete recognition and fertilization. The IZUMO1:IZUMO1R/JUNO interaction is a necessary adhesion event between sperm and egg that is required for fertilization but is not sufficient for cell fusion. The ligand-receptor interaction probably does not act as a membrane 'fusogen'. Does not bind folate. In Mus musculus (Mouse), this protein is Sperm-egg fusion protein Juno.